We begin with the raw amino-acid sequence, 904 residues long: Toll-like receptor 3 (904 aa).

A signal peptide spans 1–26 (MSRPLPYHIYFFTGLLTCWILCTSSA). In terms of domain architecture, LRRNT spans 27-52 (HKCTVRHEVADCSHLKLTQIPEDLPT). Residues 27 to 705 (HKCTVRHEVA…PCKDSAPFEL (679 aa)) are Lumenal-facing. An intrachain disulfide couples Cys29 to Cys38. 3 N-linked (GlcNAc...) asparagine glycosylation sites follow: Asn53, Asn58, and Asn71. LRR repeat units follow at residues 53-74 (NITV…NFTR), 77-98 (RLTI…LCQN), 101-122 (WLEI…TFVF), 125-146 (NLTE…PFKN), 149-170 (NLIK…TQLQ), and 173-196 (NLQE…DFLG). The cysteines at positions 96 and 123 are disulfide-linked. N-linked (GlcNAc...) asparagine glycosylation occurs at Asn125. N-linked (GlcNAc...) asparagine glycosylation occurs at Asn197. LRR repeat units follow at residues 199–220 (SLER…CFHA) and 223–245 (KLSG…LCLE). Residues Asn248, Asn253, Asn276, and Asn292 are each glycosylated (N-linked (GlcNAc...) asparagine). LRR repeat units follow at residues 250 to 271 (SIEN…TFSG), 276 to 297 (NLTT…SFAW), 300 to 321 (HLEY…SFYG), 324 to 345 (NLRH…TSLP), 357 to 378 (CLEY…TFTG), 381 to 401 (RLKF…TNET), 409 to 430 (PLLL…AFSW), 433 to 455 (HLEV…EWRG), 466 to 487 (YNKY…QRLM), 508 to 529 (NLVI…LLKG), 532 to 553 (KLEI…ANPG), 564 to 585 (HLRI…AFKD), 588 to 609 (ELKS…VFDN), and 612 to 633 (SLKS…VFGP). N-linked (GlcNAc...) asparagine glycans are attached at residues Asn399 and Asn414. Residues Asn637, Asn663, and Asn668 are each glycosylated (N-linked (GlcNAc...) asparagine). An LRRCT domain is found at 646-699 (NPFDCTCESIAWFVNWINSTHTNISELSNHYLCNTPPQYHGFPVMLFDVSPCKD). 2 disulfide bridges follow: Cys650/Cys678 and Cys652/Cys697. Residues 706-726 (LFMINTNILLIFIFIVLLIHF) form a helical membrane-spanning segment. Residues 727–904 (EGWRISFYWN…VALGSRNSAH (178 aa)) lie on the Cytoplasmic side of the membrane. The 144-residue stretch at 754 to 897 (FEYAAYIIHA…AFHHKLKVAL (144 aa)) folds into the TIR domain. Tyr759 carries the phosphotyrosine modification. Residues Lys812 and Lys831 each participate in a glycyl lysine isopeptide (Lys-Gly) (interchain with G-Cter in ubiquitin) cross-link. Tyr858 is subject to Phosphotyrosine.

The protein belongs to the Toll-like receptor family. Monomer and homodimer; dimerization is triggered by ligand-binding and is required for TLR3 signaling. Interacts (via transmembrane domain) with UNC93B1. Interacts with TICAM1 (via the TIR domain) in response to poly(I:C) and this interaction is enhanced the presence of WDFY1. Interacts with SRC; upon binding of double-stranded RNA. The tyrosine-phosphorylated form (via TIR domain) interacts with WDFY1 (via WD repeat 2) in response to poly(I:C). Ubiquitinated by TRIM3; leading to recognition and sorting of polyubiquitinated TLR3 by the ESCRT complexes. Ubiquitinated by ZNRF1 via 'Lys-63'-linked ubiquitin chains; leading to TLR3 lysosomal trafficking and degradation.

Its subcellular location is the endoplasmic reticulum membrane. It localises to the endosome membrane. The protein resides in the early endosome. Functionally, key component of innate and adaptive immunity. TLRs (Toll-like receptors) control host immune response against pathogens through recognition of molecular patterns specific to microorganisms. TLR3 is a nucleotide-sensing TLR which is activated by double-stranded RNA, a sign of viral infection. Acts via the adapter TRIF/TICAM1, leading to NF-kappa-B activation, cytokine secretion and the inflammatory response. This chain is Toll-like receptor 3 (TLR3), found in Boselaphus tragocamelus (Nilgai).